Here is an 828-residue protein sequence, read N- to C-terminus: Kinesin-associated protein 3 (828 aa).

ARM repeat units lie at residues 332 to 372, 373 to 411, and 577 to 611; these read YVEN…NLSF, DTDL…HVSQ, and DDSC…CQIV.

Heterotrimer of a 115 kDa subunit (KAP115) and two kinesin-like subunits of 95 kDa (KRP95) and 85 kDa (KRP85).

In terms of biological role, binds to the tail domain of the KRP85/KRP95 heterodimer to form a heterotrimeric kinesin-II complex and may regulate the spindle vesicle targeting of this complex. This is Kinesin-associated protein 3 (KAP115) from Strongylocentrotus purpuratus (Purple sea urchin).